Reading from the N-terminus, the 500-residue chain is GTPase Der (500 aa).

EngA-type G domains follow at residues 3–166 (PVVA…MEEL) and 211–384 (IKLA…VSAT). Residues 9 to 16 (GRPNVGKS), 56 to 60 (DTGGI), 118 to 121 (NKID), 217 to 224 (GRPNVGKS), 264 to 268 (DTAGV), and 329 to 332 (NKWD) each bind GTP. The KH-like domain maps to 385 to 469 (KRVGTSVLTR…PIRIQFQNSE (85 aa)). Residues 481–500 (LSQERQRKRLVGAVKNRNKK) form a disordered region. Residues 486-500 (QRKRLVGAVKNRNKK) show a composition bias toward basic residues.

This sequence belongs to the TRAFAC class TrmE-Era-EngA-EngB-Septin-like GTPase superfamily. EngA (Der) GTPase family. In terms of assembly, associates with the 50S ribosomal subunit.

In terms of biological role, GTPase that plays an essential role in the late steps of ribosome biogenesis. This Aliivibrio salmonicida (strain LFI1238) (Vibrio salmonicida (strain LFI1238)) protein is GTPase Der.